The following is a 541-amino-acid chain: 2-isopropylmalate synthase (541 aa).

Positions 8-284 constitute a Pyruvate carboxyltransferase domain; that stretch reads VIIFDTTLRD…LTNINTRHIY (277 aa). Positions 17, 208, 210, and 244 each coordinate Mn(2+). Residues 408 to 541 form a regulatory domain region; that stretch reads RLELVQVSCG…DQPTEVVAGS (134 aa).

This sequence belongs to the alpha-IPM synthase/homocitrate synthase family. LeuA type 1 subfamily. In terms of assembly, homodimer. Requires Mn(2+) as cofactor.

Its subcellular location is the cytoplasm. It catalyses the reaction 3-methyl-2-oxobutanoate + acetyl-CoA + H2O = (2S)-2-isopropylmalate + CoA + H(+). Its pathway is amino-acid biosynthesis; L-leucine biosynthesis; L-leucine from 3-methyl-2-oxobutanoate: step 1/4. Its function is as follows. Catalyzes the condensation of the acetyl group of acetyl-CoA with 3-methyl-2-oxobutanoate (2-ketoisovalerate) to form 3-carboxy-3-hydroxy-4-methylpentanoate (2-isopropylmalate). The sequence is that of 2-isopropylmalate synthase from Trichodesmium erythraeum (strain IMS101).